Here is a 218-residue protein sequence, read N- to C-terminus: Guanylate kinase (218 aa).

In terms of domain architecture, Guanylate kinase-like spans 17–196 (GVLLALSSPS…ALEKLNEILH (180 aa)). Residue 24-31 (SPSGAGKT) coordinates ATP.

Belongs to the guanylate kinase family.

It is found in the cytoplasm. The enzyme catalyses GMP + ATP = GDP + ADP. Its function is as follows. Essential for recycling GMP and indirectly, cGMP. This chain is Guanylate kinase, found in Maricaulis maris (strain MCS10) (Caulobacter maris).